We begin with the raw amino-acid sequence, 410 residues long: Mating-type locus allele B6 protein (410 aa).

The segment at 1–110 (MSRDPKLSLS…VNVASPAVEY (110 aa)) is variable domain between B alleles. The segment at residues 107–184 (AVEYRNLSED…NARRRSGWSH (78 aa)) is a DNA-binding region (homeobox; TALE-type). The highly conserved between B alleles stretch occupies residues 111–410 (RNLSEDLPAY…PFFCLSIAFV (300 aa)). Disordered regions lie at residues 202-224 (RAKL…PSDD), 278-335 (TPKP…TPEL), and 373-393 (KARG…QQPD). The span at 205–219 (LSSSNQSTPPSLTSE) shows a compositional bias: polar residues. A Nuclear localization signal motif is present at residues 276–308 (KKTPKPGMPRPVTTVAKRQPARKTKPAAKPKSR). Residues 294 to 307 (QPARKTKPAAKPKS) show a composition bias toward basic residues. Positions 312–335 (PRASTTPSIDSTLDSSKLESTPEL) are enriched in polar residues. The not essential for B6 function stretch occupies residues 333-410 (PELSMCSTAD…PFFCLSIAFV (78 aa)). Positions 375–388 (RGNRKVKALPKRAG) are enriched in basic residues.

Belongs to the TALE/M-ATYP homeobox family.

It localises to the nucleus. Functionally, the B locus has at least 25 alleles, and any combination of two different B alleles yields a multimeric regulatory protein, that activates genes responsible for the pathogenicity and for the sexual development of the fungus within the corn plant. This is Mating-type locus allele B6 protein from Mycosarcoma maydis (Corn smut fungus).